Consider the following 421-residue polypeptide: Gamma-glutamyl phosphate reductase (421 aa).

The protein belongs to the gamma-glutamyl phosphate reductase family.

It localises to the cytoplasm. It carries out the reaction L-glutamate 5-semialdehyde + phosphate + NADP(+) = L-glutamyl 5-phosphate + NADPH + H(+). Its pathway is amino-acid biosynthesis; L-proline biosynthesis; L-glutamate 5-semialdehyde from L-glutamate: step 2/2. Catalyzes the NADPH-dependent reduction of L-glutamate 5-phosphate into L-glutamate 5-semialdehyde and phosphate. The product spontaneously undergoes cyclization to form 1-pyrroline-5-carboxylate. This chain is Gamma-glutamyl phosphate reductase, found in Nocardia farcinica (strain IFM 10152).